A 142-amino-acid polypeptide reads, in one-letter code: Transcriptional regulator MraZ (142 aa).

SpoVT-AbrB domains lie at A5 to E51 and A77 to T120.

This sequence belongs to the MraZ family. In terms of assembly, forms oligomers.

Its subcellular location is the cytoplasm. The protein resides in the nucleoid. This chain is Transcriptional regulator MraZ, found in Burkholderia cenocepacia (strain HI2424).